The sequence spans 750 residues: Photosystem I P700 chlorophyll a apoprotein A1 (750 aa).

Transmembrane regions (helical) follow at residues 70–93, 156–179, 195–219, 291–309, 346–369, 385–411, 433–455, and 531–549; these read VFSA…FHGA, LYCT…FHYH, LNHH…HVSL, IIHH…GHMY, WHAQ…HHMY, LSLF…IFMV, AIIS…LYIH, and FLVH…LILL. The [4Fe-4S] cluster site is built by C573 and C582. 2 consecutive transmembrane segments (helical) span residues 589-610 and 664-686; these read HVFL…HFSW and LSAY…MFLF. Residue H675 coordinates chlorophyll a'. Residues M683 and Y691 each contribute to the chlorophyll a site. W692 contributes to the phylloquinone binding site. A helical transmembrane segment spans residues 724 to 744; the sequence is AVGVTHYLLGGIATTWAFFLA.

The protein belongs to the PsaA/PsaB family. The PsaA/B heterodimer binds the P700 chlorophyll special pair and subsequent electron acceptors. PSI consists of a core antenna complex that captures photons, and an electron transfer chain that converts photonic excitation into a charge separation. The eukaryotic PSI reaction center is composed of at least 11 subunits. Requires P700 is a chlorophyll a/chlorophyll a' dimer, A0 is one or more chlorophyll a, A1 is one or both phylloquinones and FX is a shared 4Fe-4S iron-sulfur center. as cofactor.

It is found in the plastid. Its subcellular location is the chloroplast thylakoid membrane. The catalysed reaction is reduced [plastocyanin] + hnu + oxidized [2Fe-2S]-[ferredoxin] = oxidized [plastocyanin] + reduced [2Fe-2S]-[ferredoxin]. Its function is as follows. PsaA and PsaB bind P700, the primary electron donor of photosystem I (PSI), as well as the electron acceptors A0, A1 and FX. PSI is a plastocyanin-ferredoxin oxidoreductase, converting photonic excitation into a charge separation, which transfers an electron from the donor P700 chlorophyll pair to the spectroscopically characterized acceptors A0, A1, FX, FA and FB in turn. Oxidized P700 is reduced on the lumenal side of the thylakoid membrane by plastocyanin. This is Photosystem I P700 chlorophyll a apoprotein A1 from Phaseolus vulgaris (Kidney bean).